A 154-amino-acid polypeptide reads, in one-letter code: Protein phosphatase 1 regulatory subunit 27 (154 aa).

2 ANK repeats span residues 63–92 and 96–125; these read SGLA…DIHQ and TGWT…DRDA.

In terms of assembly, interacts with DYSF and PPP1CA.

Functionally, inhibits phosphatase activity of protein phosphatase 1 (PP1) complexes. This chain is Protein phosphatase 1 regulatory subunit 27 (Ppp1r27), found in Mus musculus (Mouse).